The chain runs to 285 residues: Release factor glutamine methyltransferase (285 aa).

Aspartate 143 and asparagine 189 together coordinate S-adenosyl-L-methionine. 189–192 (NPPY) provides a ligand contact to substrate.

Belongs to the protein N5-glutamine methyltransferase family. PrmC subfamily.

It catalyses the reaction L-glutaminyl-[peptide chain release factor] + S-adenosyl-L-methionine = N(5)-methyl-L-glutaminyl-[peptide chain release factor] + S-adenosyl-L-homocysteine + H(+). Its function is as follows. Methylates the class 1 translation termination release factors RF1/PrfA and RF2/PrfB on the glutamine residue of the universally conserved GGQ motif. The sequence is that of Release factor glutamine methyltransferase from Clostridium acetobutylicum (strain ATCC 824 / DSM 792 / JCM 1419 / IAM 19013 / LMG 5710 / NBRC 13948 / NRRL B-527 / VKM B-1787 / 2291 / W).